The following is a 112-amino-acid chain: Replication initiation control protein YabA (112 aa).

Positions 85, 87, 101, and 104 each coordinate Zn(2+).

This sequence belongs to the YabA family. In terms of assembly, homotetramer. Interacts with both DnaA and DnaN, acting as a bridge between these two proteins. It depends on Zn(2+) as a cofactor.

The protein resides in the cytoplasm. The protein localises to the nucleoid. Involved in control of chromosome replication initiation. Inhibits the cooperative binding of DnaA to the oriC region, thus negatively regulating initiation of chromosome replication. Inhibits the ability of DnaA-ATP to form a helix on DNA; does not disassemble preformed DnaA-DNA helices. Decreases the residence time of DnaA on the chromosome at its binding sites (oriC, replication forks and promoter-binding sites). Tethers DnaA to the replication machinery via the DNA polymerase beta sliding clamp subunit (dnaN). Associates with oriC and other DnaA targets on the chromosome in a DnaA-dependent manner. This chain is Replication initiation control protein YabA, found in Lacticaseibacillus casei (strain BL23) (Lactobacillus casei).